A 476-amino-acid polypeptide reads, in one-letter code: Bifunctional protein HldE (476 aa).

Positions 1-318 (MKVTLPEFER…ENAVRGRADT (318 aa)) are ribokinase. 195–198 (NLSE) contacts ATP. Aspartate 264 is a catalytic residue. Residues 344 to 476 (MTNGVFDILH…IIKKIQKDSQ (133 aa)) form a cytidylyltransferase region.

In the N-terminal section; belongs to the carbohydrate kinase PfkB family. It in the C-terminal section; belongs to the cytidylyltransferase family. Homodimer.

It carries out the reaction D-glycero-beta-D-manno-heptose 7-phosphate + ATP = D-glycero-beta-D-manno-heptose 1,7-bisphosphate + ADP + H(+). The enzyme catalyses D-glycero-beta-D-manno-heptose 1-phosphate + ATP + H(+) = ADP-D-glycero-beta-D-manno-heptose + diphosphate. It participates in nucleotide-sugar biosynthesis; ADP-L-glycero-beta-D-manno-heptose biosynthesis; ADP-L-glycero-beta-D-manno-heptose from D-glycero-beta-D-manno-heptose 7-phosphate: step 1/4. Its pathway is nucleotide-sugar biosynthesis; ADP-L-glycero-beta-D-manno-heptose biosynthesis; ADP-L-glycero-beta-D-manno-heptose from D-glycero-beta-D-manno-heptose 7-phosphate: step 3/4. Its function is as follows. Catalyzes the phosphorylation of D-glycero-D-manno-heptose 7-phosphate at the C-1 position to selectively form D-glycero-beta-D-manno-heptose-1,7-bisphosphate. Catalyzes the ADP transfer from ATP to D-glycero-beta-D-manno-heptose 1-phosphate, yielding ADP-D-glycero-beta-D-manno-heptose. The polypeptide is Bifunctional protein HldE (Enterobacter sp. (strain 638)).